The primary structure comprises 205 residues: Outer-membrane lipoprotein LolB (205 aa).

The first 17 residues, 1–17 (MFLRHVIVFSFIALLAG), serve as a signal peptide directing secretion. A lipid anchor (N-palmitoyl cysteine) is attached at Cys-18. A lipid anchor (S-diacylglycerol cysteine) is attached at Cys-18.

It belongs to the LolB family. As to quaternary structure, monomer.

The protein resides in the cell outer membrane. Plays a critical role in the incorporation of lipoproteins in the outer membrane after they are released by the LolA protein. This Pseudomonas fluorescens (strain Pf0-1) protein is Outer-membrane lipoprotein LolB.